A 347-amino-acid chain; its full sequence is RNA 3'-terminal phosphate cyclase (347 aa).

ATP contacts are provided by residues Gln109 and 290–294 (YLADQ). His315 acts as the Tele-AMP-histidine intermediate in catalysis.

The protein belongs to the RNA 3'-terminal cyclase family. Type 1 subfamily.

It is found in the cytoplasm. The enzyme catalyses a 3'-end 3'-phospho-ribonucleotide-RNA + ATP = a 3'-end 2',3'-cyclophospho-ribonucleotide-RNA + AMP + diphosphate. In terms of biological role, catalyzes the conversion of 3'-phosphate to a 2',3'-cyclic phosphodiester at the end of RNA. The mechanism of action of the enzyme occurs in 3 steps: (A) adenylation of the enzyme by ATP; (B) transfer of adenylate to an RNA-N3'P to produce RNA-N3'PP5'A; (C) and attack of the adjacent 2'-hydroxyl on the 3'-phosphorus in the diester linkage to produce the cyclic end product. The biological role of this enzyme is unknown but it is likely to function in some aspects of cellular RNA processing. This Ralstonia nicotianae (strain ATCC BAA-1114 / GMI1000) (Ralstonia solanacearum) protein is RNA 3'-terminal phosphate cyclase.